The chain runs to 231 residues: Uracil-DNA glycosylase (231 aa).

Asp-74 (proton acceptor) is an active-site residue.

It belongs to the uracil-DNA glycosylase (UDG) superfamily. UNG family.

The protein localises to the cytoplasm. The enzyme catalyses Hydrolyzes single-stranded DNA or mismatched double-stranded DNA and polynucleotides, releasing free uracil.. Excises uracil residues from the DNA which can arise as a result of misincorporation of dUMP residues by DNA polymerase or due to deamination of cytosine. The sequence is that of Uracil-DNA glycosylase from Campylobacter jejuni subsp. doylei (strain ATCC BAA-1458 / RM4099 / 269.97).